A 451-amino-acid polypeptide reads, in one-letter code: PTS system galactose-specific EIIC component (451 aa).

One can recognise a PTS EIIC type-3 domain in the interval 8–427; sequence LNKTLMPLAS…VLNVLIYYPF (420 aa). 11 helical membrane passes run 40–60, 69–89, 104–124, 151–171, 190–210, 239–259, 263–283, 296–316, 332–352, 356–376, and 403–423; these read LGIA…VDFL, FSAV…YNFA, GLLS…VPVV, TGST…LVYI, VVDS…MFGI, ANPW…FFGI, LIGG…IDAY, IVFA…GLVI, LGAI…LPMM, LFFI…LGLA, and ISGG…NVLI.

It is found in the cell membrane. In terms of biological role, the phosphoenolpyruvate-dependent sugar phosphotransferase system (PTS), a major carbohydrate active transport system, catalyzes the phosphorylation of incoming sugar substrates concomitant with their translocation across the cell membrane. Involved in galactose transport with PtcA and PtcB. In Lactococcus lactis subsp. cremoris (strain MG1363), this protein is PTS system galactose-specific EIIC component.